The sequence spans 159 residues: Heterocyst differentiation protein HetP (159 aa).

The tract at residues 1-50 is required to complement a hetP deletion; sequence MNQNTTGITNYNKAINPQQFDKVVEAILAGKYSWACVLMLRFAGYNPMHY.

The protein belongs to the HetP family. In terms of assembly, in bacterial two-hybrid assays interacts weakly with Asl1930, Alr2902 and Alr3234.

Its function is as follows. Promotes heterocyst differentiation and commitment when nitrogen is limiting. Interplay between the 4 HetP paralogs controls the timing of commitment to heterocyst formation and its duration. Epistatic analysis show that the 3 paralogs act upstream of hetP to delay commitment (asl1930, alr3234) or inhibit development (alr2902). Asl1930 and Alr3234 must also attenuate the activity of Alr2902. Required for heterocyst formation. Functions directly downstream of master regulator HetR to promote heterocyst differentiation, functioning downstream of patterning (cell choice). Partially functionally redundant with homologs alr2902 and asl1930 but not alr3234. Overexpression leads to more than wild-type levels of heterocysts. Overexpression in the absence of hetR partially bypasses hetR deletion, allowing differentiation of heterocysts, although they only fix nitrogen in the absence of oxygen (a Fox- Fix+ phenotype), suggesting they are not fully. In Nostoc sp. (strain PCC 7120 / SAG 25.82 / UTEX 2576), this protein is Heterocyst differentiation protein HetP.